A 231-amino-acid polypeptide reads, in one-letter code: NADH-ubiquinone oxidoreductase chain 4 (231 aa).

Helical transmembrane passes span 1 to 21 (PIAG…YGII), 34 to 54 (MFLP…LTCL), 63 to 85 (IAYS…TPWG), 89 to 111 (AMAL…NTTY), 128 to 148 (ILPM…ATPP), 169 to 189 (TIIL…HMFL), and 211 to 231 (LLMT…ELVI).

It belongs to the complex I subunit 4 family.

The protein localises to the mitochondrion membrane. The catalysed reaction is a ubiquinone + NADH + 5 H(+)(in) = a ubiquinol + NAD(+) + 4 H(+)(out). Core subunit of the mitochondrial membrane respiratory chain NADH dehydrogenase (Complex I) that is believed to belong to the minimal assembly required for catalysis. Complex I functions in the transfer of electrons from NADH to the respiratory chain. The immediate electron acceptor for the enzyme is believed to be ubiquinone. This chain is NADH-ubiquinone oxidoreductase chain 4 (MT-ND4), found in Porthidium ophryomegas (Slender hognose viper).